The following is a 578-amino-acid chain: Arginine--tRNA ligase (578 aa).

The 'HIGH' region motif lies at 127–137 (PNLAKEMHVGH).

The protein belongs to the class-I aminoacyl-tRNA synthetase family. As to quaternary structure, monomer.

It is found in the cytoplasm. The catalysed reaction is tRNA(Arg) + L-arginine + ATP = L-arginyl-tRNA(Arg) + AMP + diphosphate. The sequence is that of Arginine--tRNA ligase from Pseudomonas putida (strain ATCC 700007 / DSM 6899 / JCM 31910 / BCRC 17059 / LMG 24140 / F1).